A 475-amino-acid polypeptide reads, in one-letter code: UDP-N-acetylmuramate--L-alanine ligase (475 aa).

114 to 120 serves as a coordination point for ATP; the sequence is GTHGKTT.

It belongs to the MurCDEF family.

It is found in the cytoplasm. The enzyme catalyses UDP-N-acetyl-alpha-D-muramate + L-alanine + ATP = UDP-N-acetyl-alpha-D-muramoyl-L-alanine + ADP + phosphate + H(+). It participates in cell wall biogenesis; peptidoglycan biosynthesis. Functionally, cell wall formation. This chain is UDP-N-acetylmuramate--L-alanine ligase, found in Bartonella bacilliformis (strain ATCC 35685 / KC583 / Herrer 020/F12,63).